The following is a 207-amino-acid chain: GILT-like protein 2 (207 aa).

Residues 1 to 19 (MRAAVFVCLLLGWVGVATP) form the signal peptide. Cysteines 40 and 43 form a disulfide. Asn-182 is a glycosylation site (N-linked (GlcNAc...) asparagine).

It belongs to the GILT family.

It localises to the secreted. In terms of biological role, probable lysosomal thiol reductase that can reduce protein disulfide bonds. Involved in the immune response to bacterial infection. This Drosophila melanogaster (Fruit fly) protein is GILT-like protein 2.